The following is a 177-amino-acid chain: O-acetyl-ADP-ribose deacetylase (177 aa).

One can recognise a Macro domain in the interval 1–175 (MKSRIHVQHG…LYERLLTQQG (175 aa)). Substrate contacts are provided by residues 11-12 (DI), N25, 33-35 (GVD), and 122-126 (STGAY). D35 (proton acceptor) is an active-site residue.

This sequence belongs to the MacroD-type family. YmdB subfamily. As to quaternary structure, homodimer. Interacts with RNase III.

It catalyses the reaction 3''-O-acetyl-ADP-D-ribose + H2O = ADP-D-ribose + acetate + H(+). The catalysed reaction is 2''-O-acetyl-ADP-D-ribose + H2O = ADP-D-ribose + acetate + H(+). In terms of biological role, deacetylates O-acetyl-ADP ribose to yield ADP-ribose and free acetate. Down-regulates ribonuclease 3 (RNase III) activity. Acts by interacting directly with the region of the ribonuclease that is required for dimerization/activation. This chain is O-acetyl-ADP-ribose deacetylase, found in Citrobacter koseri (strain ATCC BAA-895 / CDC 4225-83 / SGSC4696).